An 883-amino-acid polypeptide reads, in one-letter code: Bifunctional heparan sulfate N-deacetylase/N-sulfotransferase 2 (883 aa).

Residues 1-18 (MLQLWKVVRPARQLELHR) lie on the Cytoplasmic side of the membrane. A helical; Signal-anchor for type II membrane protein membrane pass occupies residues 19 to 39 (LILLLIGFSLVSMGFLAYYVS). At 40 to 883 (TSPKAKEPLP…REELQHSSVG (844 aa)) the chain is on the lumenal side. The interval 41-597 (SPKAKEPLPL…KRHKDIWSKE (557 aa)) is heparan sulfate N-deacetylase 2. A disordered region spans residues 49–82 (PLPLGDCSSSGAAGPGPARPPVPPRPQRPPETTR). Residues 65–77 (PARPPVPPRPQRP) show a composition bias toward pro residues. N-linked (GlcNAc...) asparagine glycans are attached at residues Asn-233, Asn-350, and Asn-400. The tract at residues 598–883 (KTCDRLPKFL…REELQHSSVG (286 aa)) is heparan sulfate N-sulfotransferase 2. The For sulfotransferase activity role is filled by Lys-613. 613–617 (KTGTT) is a binding site for 3'-phosphoadenylyl sulfate. Residue Asn-666 is glycosylated (N-linked (GlcNAc...) asparagine). Ser-711 lines the 3'-phosphoadenylyl sulfate pocket. N-linked (GlcNAc...) asparagine glycans are attached at residues Asn-726 and Asn-802. Residues Cys-817 and Cys-827 are joined by a disulfide bond. 832–836 (KGRRY) serves as a coordination point for 3'-phosphoadenylyl sulfate.

It belongs to the sulfotransferase 1 family. NDST subfamily. In terms of assembly, monomer. As to expression, widely expressed in adult and throughout development.

It is found in the golgi apparatus membrane. The enzyme catalyses alpha-D-glucosaminyl-[heparan sulfate](n) + 3'-phosphoadenylyl sulfate = N-sulfo-alpha-D-glucosaminyl-[heparan sulfate](n) + adenosine 3',5'-bisphosphate + 2 H(+). The protein operates within glycan metabolism; heparan sulfate biosynthesis. Its pathway is glycan metabolism; heparin biosynthesis. Essential bifunctional enzyme that catalyzes both the N-deacetylation and the N-sulfation of glucosamine (GlcNAc) of the glycosaminoglycan in heparan sulfate. Modifies the GlcNAc-GlcA disaccharide repeating sugar backbone to make N-sulfated heparosan, a prerequisite substrate for later modifications in heparin biosynthesis. Plays a role in determining the extent and pattern of sulfation of heparan sulfate. Required for the exosomal release of SDCBP, CD63 and syndecan. The chain is Bifunctional heparan sulfate N-deacetylase/N-sulfotransferase 2 (Ndst2) from Mus musculus (Mouse).